The sequence spans 264 residues: Thymidylate synthase (264 aa).

A dUMP-binding site is contributed by R21. H51 is a (6R)-5,10-methylene-5,6,7,8-tetrahydrofolate binding site. Residue 126–127 (RR) coordinates dUMP. The Nucleophile role is filled by C146. DUMP-binding positions include 166–169 (RSAD), N177, and 207–209 (HIY). D169 serves as a coordination point for (6R)-5,10-methylene-5,6,7,8-tetrahydrofolate. A263 is a binding site for (6R)-5,10-methylene-5,6,7,8-tetrahydrofolate.

The protein belongs to the thymidylate synthase family. Bacterial-type ThyA subfamily. Homodimer.

The protein localises to the cytoplasm. It carries out the reaction dUMP + (6R)-5,10-methylene-5,6,7,8-tetrahydrofolate = 7,8-dihydrofolate + dTMP. It participates in pyrimidine metabolism; dTTP biosynthesis. Functionally, catalyzes the reductive methylation of 2'-deoxyuridine-5'-monophosphate (dUMP) to 2'-deoxythymidine-5'-monophosphate (dTMP) while utilizing 5,10-methylenetetrahydrofolate (mTHF) as the methyl donor and reductant in the reaction, yielding dihydrofolate (DHF) as a by-product. This enzymatic reaction provides an intracellular de novo source of dTMP, an essential precursor for DNA biosynthesis. This chain is Thymidylate synthase, found in Brucella abortus (strain 2308).